The chain runs to 283 residues: Shikimate dehydrogenase (NADP(+)) (283 aa).

Shikimate contacts are provided by residues 19 to 21 (SRS) and threonine 66. Lysine 70 (proton acceptor) is an active-site residue. Glutamate 82 is an NADP(+) binding site. 2 residues coordinate shikimate: asparagine 91 and aspartate 107. NADP(+) is bound by residues 133–137 (GAGGA) and isoleucine 226. Tyrosine 228 is a binding site for shikimate. Glycine 249 contacts NADP(+).

This sequence belongs to the shikimate dehydrogenase family. Homodimer.

The enzyme catalyses shikimate + NADP(+) = 3-dehydroshikimate + NADPH + H(+). The protein operates within metabolic intermediate biosynthesis; chorismate biosynthesis; chorismate from D-erythrose 4-phosphate and phosphoenolpyruvate: step 4/7. In terms of biological role, involved in the biosynthesis of the chorismate, which leads to the biosynthesis of aromatic amino acids. Catalyzes the reversible NADPH linked reduction of 3-dehydroshikimate (DHSA) to yield shikimate (SA). This Rhodospirillum rubrum (strain ATCC 11170 / ATH 1.1.1 / DSM 467 / LMG 4362 / NCIMB 8255 / S1) protein is Shikimate dehydrogenase (NADP(+)).